The sequence spans 312 residues: Elongation factor Ts (312 aa).

Residues 84 to 87 are involved in Mg(2+) ion dislocation from EF-Tu; that stretch reads TDFL.

The protein belongs to the EF-Ts family.

Its subcellular location is the cytoplasm. Associates with the EF-Tu.GDP complex and induces the exchange of GDP to GTP. It remains bound to the aminoacyl-tRNA.EF-Tu.GTP complex up to the GTP hydrolysis stage on the ribosome. This chain is Elongation factor Ts, found in Caulobacter sp. (strain K31).